Here is a 972-residue protein sequence, read N- to C-terminus: UPF0746 protein DDB_G0280785 (972 aa).

The segment covering 1–19 has biased composition (basic and acidic residues); that stretch reads MISNKRKEIENINRHHEKD. The interval 1–30 is disordered; it reads MISNKRKEIENINRHHEKDNDDDDSDGIDN. Residues 44 to 78 form the SAP domain; the sequence is SGSTNYRELQIIAKSLGLASNGKKQLVYNRIEGYF.

This sequence belongs to the UPF0746 family.

The sequence is that of UPF0746 protein DDB_G0280785 from Dictyostelium discoideum (Social amoeba).